Consider the following 168-residue polypeptide: Thiol peroxidase (168 aa).

Positions Pro19–Ala168 constitute a Thioredoxin domain. Cys61 functions as the Cysteine sulfenic acid (-SOH) intermediate in the catalytic mechanism. A disulfide bond links Cys61 and Cys95.

Belongs to the peroxiredoxin family. Tpx subfamily. Homodimer.

It catalyses the reaction a hydroperoxide + [thioredoxin]-dithiol = an alcohol + [thioredoxin]-disulfide + H2O. Thiol-specific peroxidase that catalyzes the reduction of hydrogen peroxide and organic hydroperoxides to water and alcohols, respectively. Plays a role in cell protection against oxidative stress by detoxifying peroxides. This chain is Thiol peroxidase, found in Salmonella typhi.